We begin with the raw amino-acid sequence, 831 residues long: MADEIKKENAPKKLSIQRRTKTTVSGTSTTGKSKEVQVEVRKKRTVTTDLERKAQEQAKLKAKEEAEKRAAEEKLAEKAKREAEKAKAEQIKIEKAKAEQAKASKKNVDVEKEKRRAEEAELRRKADELARQKAEEKAQKAAEEAKRYADFDDSDNDNGKLDDYSDYHLTSSYALEAENEEERRNENRGRSKNKVVKAKKGGRDDENGNKNERQSDRRNQKDVKGKGKHAKKASALQQAFTKPAQVAKADVVIGETITVAELAAKMAVKATEIIKTMMKMGEMVTINQVIDQDTAQLVAEEMGHKVILRKENELEEMVMEDRDVNAEKVHRAPVVTIMGHVDHGKTSLLDYIRKAKVAAGEAGGITQHIGAYHVETNDGKMITFLDTPGHAAFTSMRARGAKATDIVVLVVAADDGVMPQTIEAIQHAKAANAPLVVAVNKIDKPEANPDRVEQELLQHEVISEKFGGDVQFVPVSAKKGLGIDDLLEAILLQSEVLELTAVKDGMASGVVIESYLDKGRGPVATILVQSGTLNRGDIVLCGFEYGRVRAMRDENGKDIQSAGPSIPVEVLGLSGVPAAGDEATVVRDEKKAREVALYRQGKFREVKLARQQKAKLENMFSNMAEGDVAELNVIVKADVQGSVEAIVQALHELSTAEVKVKVVGSGVGGITETDATLAAASNAIMVGFNVRADATARRVIENENIDLRYYSIIYELLNEIKAAMSGMLQPEFKQEIIGLAEVRDVFRHPKFGAIAGCMVTEGLVKRNNPIRVLRDNVVIFEGELESLRRFKDDVSEVRSGMECGIGVKNYNDVKVGDQIEVFEVVEVKRAI.

Over residues 1-11 (MADEIKKENAP) the composition is skewed to basic and acidic residues. The tract at residues 1 to 236 (MADEIKKENA…GKHAKKASAL (236 aa)) is disordered. Over residues 22–31 (TTVSGTSTTG) the composition is skewed to low complexity. Composition is skewed to basic and acidic residues over residues 49–150 (DLER…RYAD) and 157–166 (DNGKLDDYSD). The segment covering 190 to 200 (RSKNKVVKAKK) has biased composition (basic residues). Residues 201–225 (GGRDDENGNKNERQSDRRNQKDVKG) are compositionally biased toward basic and acidic residues. Positions 330 to 500 (HRAPVVTIMG…LLQSEVLELT (171 aa)) constitute a tr-type G domain. The tract at residues 339–346 (GHVDHGKT) is G1. 339–346 (GHVDHGKT) provides a ligand contact to GTP. The segment at 364–368 (GITQH) is G2. A G3 region spans residues 386-389 (DTPG). GTP contacts are provided by residues 386–390 (DTPGH) and 440–443 (NKID). A G4 region spans residues 440 to 443 (NKID). A G5 region spans residues 476–478 (SAK).

This sequence belongs to the TRAFAC class translation factor GTPase superfamily. Classic translation factor GTPase family. IF-2 subfamily.

It localises to the cytoplasm. Its function is as follows. One of the essential components for the initiation of protein synthesis. Protects formylmethionyl-tRNA from spontaneous hydrolysis and promotes its binding to the 30S ribosomal subunits. Also involved in the hydrolysis of GTP during the formation of the 70S ribosomal complex. The protein is Translation initiation factor IF-2 of Histophilus somni (strain 2336) (Haemophilus somnus).